We begin with the raw amino-acid sequence, 380 residues long: Probable protein phosphatase 2C 34 (380 aa).

Positions 32 to 335 (AAGEFSMAAA…DDISVIVVYL (304 aa)) constitute a PPM-type phosphatase domain. The Mn(2+) site is built by Asp66, Gly67, Asp267, and Asp326.

Belongs to the PP2C family. It depends on Mg(2+) as a cofactor. Mn(2+) serves as cofactor.

The enzyme catalyses O-phospho-L-seryl-[protein] + H2O = L-seryl-[protein] + phosphate. The catalysed reaction is O-phospho-L-threonyl-[protein] + H2O = L-threonyl-[protein] + phosphate. This chain is Probable protein phosphatase 2C 34 (BIPP2C2), found in Oryza sativa subsp. indica (Rice).